A 459-amino-acid chain; its full sequence is tRNA modification GTPase MnmE (459 aa).

(6S)-5-formyl-5,6,7,8-tetrahydrofolate is bound by residues Arg-23, Glu-86, and Arg-125. Residues 221–380 (GIDAVIIGKP…LENAITELFV (160 aa)) enclose the TrmE-type G domain. Asn-231 is a K(+) binding site. Residues 231 to 236 (NVGKSS), 250 to 256 (TDIPGTT), and 275 to 278 (DTAG) each bind GTP. Ser-235 serves as a coordination point for Mg(2+). K(+)-binding residues include Thr-250, Ile-252, and Thr-255. Residue Thr-256 participates in Mg(2+) binding. Lys-459 contacts (6S)-5-formyl-5,6,7,8-tetrahydrofolate.

This sequence belongs to the TRAFAC class TrmE-Era-EngA-EngB-Septin-like GTPase superfamily. TrmE GTPase family. As to quaternary structure, homodimer. Heterotetramer of two MnmE and two MnmG subunits. Requires K(+) as cofactor.

Its subcellular location is the cytoplasm. In terms of biological role, exhibits a very high intrinsic GTPase hydrolysis rate. Involved in the addition of a carboxymethylaminomethyl (cmnm) group at the wobble position (U34) of certain tRNAs, forming tRNA-cmnm(5)s(2)U34. The polypeptide is tRNA modification GTPase MnmE (Acetivibrio thermocellus (strain ATCC 27405 / DSM 1237 / JCM 9322 / NBRC 103400 / NCIMB 10682 / NRRL B-4536 / VPI 7372) (Clostridium thermocellum)).